Reading from the N-terminus, the 861-residue chain is DNA mismatch repair protein MutS (861 aa).

Position 616 to 623 (616 to 623 (GPNMGGKS)) interacts with ATP.

This sequence belongs to the DNA mismatch repair MutS family.

In terms of biological role, this protein is involved in the repair of mismatches in DNA. It is possible that it carries out the mismatch recognition step. This protein has a weak ATPase activity. The chain is DNA mismatch repair protein MutS from Haemophilus influenzae (strain PittEE).